The primary structure comprises 99 residues: Aspartyl/glutamyl-tRNA(Asn/Gln) amidotransferase subunit C (99 aa).

The protein belongs to the GatC family. As to quaternary structure, heterotrimer of A, B and C subunits.

The catalysed reaction is L-glutamyl-tRNA(Gln) + L-glutamine + ATP + H2O = L-glutaminyl-tRNA(Gln) + L-glutamate + ADP + phosphate + H(+). It catalyses the reaction L-aspartyl-tRNA(Asn) + L-glutamine + ATP + H2O = L-asparaginyl-tRNA(Asn) + L-glutamate + ADP + phosphate + 2 H(+). Functionally, allows the formation of correctly charged Asn-tRNA(Asn) or Gln-tRNA(Gln) through the transamidation of misacylated Asp-tRNA(Asn) or Glu-tRNA(Gln) in organisms which lack either or both of asparaginyl-tRNA or glutaminyl-tRNA synthetases. The reaction takes place in the presence of glutamine and ATP through an activated phospho-Asp-tRNA(Asn) or phospho-Glu-tRNA(Gln). The protein is Aspartyl/glutamyl-tRNA(Asn/Gln) amidotransferase subunit C of Polaromonas sp. (strain JS666 / ATCC BAA-500).